We begin with the raw amino-acid sequence, 682 residues long: Transcription factor 12 (682 aa).

The 9aaTAD motif lies at 19–27; the sequence is DLLDFSAMF. Disordered regions lie at residues 25 to 122, 140 to 219, and 281 to 313; these read AMFS…LYSR, LGSP…PPTS, and SVSPTDINTSLPPMSSFHRGSTSSSPYVAASHT. Polar residues-rich tracts occupy residues 30–48 and 56–76; these read PVNSGKTRPTTLGSSQFSG and GTTSWGTSGQPSPSYDSSRGF. Residues serine 47, serine 67, and serine 79 each carry the phosphoserine modification. Basic and acidic residues predominate over residues 81 to 93; that stretch reads HYSDHLNDSRLGA. Serine 98 carries the post-translational modification Phosphoserine. 2 stretches are compositionally biased toward polar residues: residues 101–121 and 144–163; these read PFMNSNLMGKTSERGSFSLYS and AQLSSSGKPGTAYYSFSATS. Lysine 110 is covalently cross-linked (Glycyl lysine isopeptide (Lys-Gly) (interchain with G-Cter in SUMO2)). Serine 116 carries the phosphoserine modification. The interval 119-140 is leucine-zipper; sequence LYSRDTGLPGCQSSLLRQDLGL. Lysine 181 is covalently cross-linked (Glycyl lysine isopeptide (Lys-Gly) (interchain with G-Cter in SUMO2)). The tract at residues 182-196 is interaction with RUNX1T1; the sequence is KVRKVPPGLPSSVYA. Positions 282-306 are enriched in polar residues; it reads VSPTDINTSLPPMSSFHRGSTSSSP. A Phosphothreonine modification is found at threonine 313. Position 333 is a phosphoserine (serine 333). Disordered regions lie at residues 349–395 and 462–580; these read PDHT…SLHS and SASM…ERRM. The span at 352-363 shows a compositional bias: low complexity; that stretch reads TSSSFPSNPSTP. Polar residues-rich tracts occupy residues 364 to 376 and 383 to 395; these read VGSPSPLTGTSQW and APSSPSYENSLHS. The span at 481–492 shows a compositional bias: low complexity; sequence SVLSSTVTTSST. Positions 506-517 are enriched in polar residues; it reads LQSQSGTVVTTE. Composition is skewed to basic and acidic residues over residues 518-530 and 536-551; these read IKTENKEKDENLH and DDMKSDDESSQKDIKV. Lysine 519 is covalently cross-linked (Glycyl lysine isopeptide (Lys-Gly) (interchain with G-Cter in SUMO2)). Serine 540 is modified (phosphoserine). Lysine 550 is covalently cross-linked (Glycyl lysine isopeptide (Lys-Gly) (interchain with G-Cter in SUMO2)). Threonine 557 is modified (phosphothreonine). Phosphoserine occurs at positions 558 and 559. Basic and acidic residues predominate over residues 568 to 580; sequence PEQKIEREKERRM. A bHLH domain is found at 577-630; sequence ERRMANNARERLRVRDINEAFKELGRMCQLHLKSEKPQTKLLILHQAVAVILSL. Glycyl lysine isopeptide (Lys-Gly) (interchain with G-Cter in SUMO2) cross-links involve residues lysine 609 and lysine 653. The segment at 632–655 is class A specific domain; that stretch reads QQVRERNLNPKAACLKRREEEKVS. The segment at 651–682 is disordered; sequence EEKVSAVSAEPPTTLPGTHPGLSETTNPMGHM. The span at 661–672 shows a compositional bias: low complexity; it reads PPTTLPGTHPGL. Over residues 673–682 the composition is skewed to polar residues; the sequence is SETTNPMGHM.

In terms of assembly, efficient DNA binding requires dimerization with another bHLH protein. Forms homo- or heterooligomers with myogenin, E12 and ITF2 proteins. Interacts with PTF1A. Interacts with NEUROD2. Interacts with RUNX1T1. Interacts with AML1-MTG8/ETO (via nervy homology region 2 in oligomerized form). Interacts with BHLHA9. As to expression, expressed in several tissues and cell types including skeletal muscle, thymus, and a B-cell line.

It localises to the nucleus. Functionally, transcriptional regulator. Involved in the initiation of neuronal differentiation. Activates transcription by binding to the E box (5'-CANNTG-3'). May be involved in the functional network that regulates the development of the GnRH axis. The protein is Transcription factor 12 (TCF12) of Homo sapiens (Human).